The primary structure comprises 362 residues: Peptide chain release factor 1 (362 aa).

N5-methylglutamine is present on glutamine 238.

The protein belongs to the prokaryotic/mitochondrial release factor family. In terms of processing, methylated by PrmC. Methylation increases the termination efficiency of RF1.

The protein resides in the cytoplasm. Functionally, peptide chain release factor 1 directs the termination of translation in response to the peptide chain termination codons UAG and UAA. The chain is Peptide chain release factor 1 from Psychrobacter arcticus (strain DSM 17307 / VKM B-2377 / 273-4).